An 820-amino-acid polypeptide reads, in one-letter code: Protein O-mannosyl-transferase 2 (820 aa).

The chain crosses the membrane as a helical span at residues 124–144; sequence AAGWWATLAVVTLLSFATRFH. Asn168 is a glycosylation site (N-linked (GlcNAc...) asparagine). 5 helical membrane-spanning segments follow: residues 170 to 190, 216 to 236, 261 to 281, 301 to 321, and 353 to 373; these read TFFFDVHPPLGKMLIGLAGYL, GFCAFLGSWLIPFAYLTVLDL, QYILLDPILMFFIMAAMLSMV, LTGISLAGALGVKFVGLFIIV, and ILCLIVLPLVLYVTIFAVHVM. N-linked (GlcNAc...) asparagine glycosylation is found at Asn376 and Asn400. MIR domains follow at residues 404–460, 473–529, and 534–591; these read PEHL…IKKY, VEFV…IEVV, and GNRI…IEEH. Asn515 carries an N-linked (GlcNAc...) asparagine glycan. N-linked (GlcNAc...) asparagine glycans are attached at residues Asn598 and Asn653. 4 helical membrane-spanning segments follow: residues 659–679, 713–733, 735–755, and 774–794; these read VYLLGNPVVWWLNLVSIVLYL, LLLGWMLHYFPFFLMGRILYF, HYFPAMLFSSMLTGILWDTLL, and VGILSLLLTTAYSFYLFHPLA.

The protein belongs to the glycosyltransferase 39 family. N-glycosylated. In terms of tissue distribution, ubiquitous. Highly expressed in the acrosome of cap phase spermatids, in spermatocytes and liver. Isoform 1 seems to be testis-specific.

It localises to the endoplasmic reticulum membrane. The catalysed reaction is a di-trans,poly-cis-dolichyl beta-D-mannosyl phosphate + L-seryl-[protein] = 3-O-(alpha-D-mannosyl)-L-seryl-[protein] + a di-trans,poly-cis-dolichyl phosphate + H(+). The enzyme catalyses a di-trans,poly-cis-dolichyl beta-D-mannosyl phosphate + L-threonyl-[protein] = 3-O-(alpha-D-mannosyl)-L-threonyl-[protein] + a di-trans,poly-cis-dolichyl phosphate + H(+). Its pathway is protein modification; protein glycosylation. Functionally, transfers mannosyl residues to the hydroxyl group of serine or threonine residues. Coexpression of both POMT1 and POMT2 is necessary for enzyme activity, expression of either POMT1 or POMT2 alone is insufficient. Essentially dedicated to O-mannosylation of alpha-DAG1 and few other proteins but not of cadherins and protocaherins. The polypeptide is Protein O-mannosyl-transferase 2 (Pomt2) (Mus musculus (Mouse)).